The primary structure comprises 1166 residues: Peroxisomal ATPase PEX6 (1166 aa).

This sequence belongs to the AAA ATPase family. In terms of assembly, interacts with PEX1; forming the PEX1-PEX6 AAA ATPase complex, which is composed of a heterohexamer formed by a trimer of PEX1-PEX6 dimers.

It localises to the membrane. It carries out the reaction ATP + H2O = ADP + phosphate + H(+). Its function is as follows. Component of the PEX1-PEX6 AAA ATPase complex involved in peroxisome biosynthesis. The complex acts as a protein dislocase complex that mediates the ATP-dependent extraction of the PEX5 receptor from peroxisomal membranes, an essential step for PEX5 recycling. Specifically recognizes PEX5 monoubiquitinated at 'Cys-6', and pulls it out of the peroxisome lumen through the PEX2-PEX10-PEX12 retrotranslocation channel. Extraction by the PEX1-PEX6 AAA ATPase complex is accompanied by unfolding of the TPR repeats and release of bound cargo from PEX5. This chain is Peroxisomal ATPase PEX6, found in Komagataella phaffii (strain GS115 / ATCC 20864) (Yeast).